Here is a 441-residue protein sequence, read N- to C-terminus: Ribosomal protein uS12 methylthiotransferase RimO (441 aa).

Positions 7–117 constitute an MTTase N-terminal domain; it reads PKISFVSLGC…VLEAVHRARP (111 aa). [4Fe-4S] cluster contacts are provided by C16, C52, C81, C148, C152, and C155. A Radical SAM core domain is found at 134–371; it reads LTPRHYAYLK…MARQQAISAR (238 aa). The TRAM domain maps to 374–440; the sequence is KRKVGTRQQV…AYDLHGTVAG (67 aa).

It belongs to the methylthiotransferase family. RimO subfamily. It depends on [4Fe-4S] cluster as a cofactor.

Its subcellular location is the cytoplasm. The catalysed reaction is L-aspartate(89)-[ribosomal protein uS12]-hydrogen + (sulfur carrier)-SH + AH2 + 2 S-adenosyl-L-methionine = 3-methylsulfanyl-L-aspartate(89)-[ribosomal protein uS12]-hydrogen + (sulfur carrier)-H + 5'-deoxyadenosine + L-methionine + A + S-adenosyl-L-homocysteine + 2 H(+). Catalyzes the methylthiolation of an aspartic acid residue of ribosomal protein uS12. The chain is Ribosomal protein uS12 methylthiotransferase RimO from Rhodopseudomonas palustris (strain ATCC BAA-98 / CGA009).